The primary structure comprises 596 residues: Elongation factor 4 (596 aa).

The tr-type G domain occupies 2–184; it reads KHIRNFSIIA…TIVAQIPPPE (183 aa). Residues 14-19 and 131-134 contribute to the GTP site; these read DHGKST and NKID.

This sequence belongs to the TRAFAC class translation factor GTPase superfamily. Classic translation factor GTPase family. LepA subfamily.

The protein resides in the cell inner membrane. The catalysed reaction is GTP + H2O = GDP + phosphate + H(+). Its function is as follows. Required for accurate and efficient protein synthesis under certain stress conditions. May act as a fidelity factor of the translation reaction, by catalyzing a one-codon backward translocation of tRNAs on improperly translocated ribosomes. Back-translocation proceeds from a post-translocation (POST) complex to a pre-translocation (PRE) complex, thus giving elongation factor G a second chance to translocate the tRNAs correctly. Binds to ribosomes in a GTP-dependent manner. The protein is Elongation factor 4 of Shewanella loihica (strain ATCC BAA-1088 / PV-4).